The chain runs to 637 residues: Chaperone protein HtpG (637 aa).

The interval 1 to 345 (MSQQETHGFQ…SNDLPLNVSR (345 aa)) is a; substrate-binding. The segment at 346-562 (EILQDNHITK…EGEMSTQMIK (217 aa)) is b. The tract at residues 563 to 637 (LMQAAGQPVP…MNQMLLANLK (75 aa)) is c.

It belongs to the heat shock protein 90 family. As to quaternary structure, homodimer.

Its subcellular location is the cytoplasm. Molecular chaperone. Has ATPase activity. This Shewanella oneidensis (strain ATCC 700550 / JCM 31522 / CIP 106686 / LMG 19005 / NCIMB 14063 / MR-1) protein is Chaperone protein HtpG.